A 757-amino-acid polypeptide reads, in one-letter code: Chloride anion exchanger (757 aa).

Over Met-1–Glu-71 the chain is Cytoplasmic. A helical membrane pass occupies residues Trp-72 to Leu-92. A topological domain (extracellular) is located at residue Ala-93. The helical transmembrane segment at Phe-94 to Ile-114 threads the bilayer. At Thr-115–His-124 the chain is on the cytoplasmic side. A helical transmembrane segment spans residues Ile-125–Val-145. Over Ser-146 to Thr-176 the chain is Extracellular. N-linked (GlcNAc...) asparagine glycans are attached at residues Asn-149 and Asn-161. The chain crosses the membrane as a helical span at residues Val-177–Tyr-197. The Cytoplasmic portion of the chain corresponds to Leu-198–Ser-201. The helical transmembrane segment at Leu-202–Met-222 threads the bilayer. Residues Leu-223–Thr-250 lie on the Extracellular side of the membrane. Residues Asn-251–Ile-271 traverse the membrane as a helical segment. Topologically, residues Asn-272–Lys-278 are cytoplasmic. A helical membrane pass occupies residues Leu-279–Gly-299. The Extracellular portion of the chain corresponds to Cys-300–Asp-335. The chain crosses the membrane as a helical span at residues Ser-336–Leu-356. The Cytoplasmic segment spans residues Lys-357–Glu-367. Residues Leu-368–Thr-388 traverse the membrane as a helical segment. Over Ala-389–Gln-404 the chain is Extracellular. The helical transmembrane segment at Val-405–Leu-425 threads the bilayer. Topologically, residues Gln-426 to Cys-462 are cytoplasmic. Residues Leu-463–Ala-483 form a helical membrane-spanning segment. The Extracellular portion of the chain corresponds to Ser-484 to Phe-757. Residues Asn-518 to Ile-713 form the STAS domain. Positions Glu-754 to Phe-757 match the PDZ-binding motif.

The protein belongs to the SLC26A/SulP transporter (TC 2.A.53) family. Interacts with PDZK1. Interacts with CFTR, SLC26A6 and NHERF1. Interacts (via PDZ-binding motif) with NHERF4 (via the third PDZ domain). This interaction leads to decreased expression of SLC26A3 on the cell membrane resulting in its reduced exchanger activity. Post-translationally, N-glycosylation is required for efficient cell surface expression, and protection from proteolytic degradation. In terms of tissue distribution, expressed in spermatogenic cells. Expressed at high levels in cecum and colon and at lower levels in small intestine.

It localises to the apical cell membrane. The protein resides in the membrane. Its subcellular location is the cell membrane. The catalysed reaction is hydrogencarbonate(in) + 2 chloride(out) = hydrogencarbonate(out) + 2 chloride(in). Functionally, mediates chloride-bicarbonate exchange with a chloride bicarbonate stoichiometry of 2:1 in the intestinal epithelia. Plays a role in the chloride and bicarbonate homeostasis during sperm epididymal maturation and capacitation. The sequence is that of Chloride anion exchanger (Slc26a3) from Mus musculus (Mouse).